The chain runs to 334 residues: Protein-methionine-sulfoxide reductase catalytic subunit MsrP (334 aa).

The tat-type signal signal peptide spans 1–44; it reads MKKNQFLKESDVTAESVFFMKRRQVLKALGISAAALSLPHAAHA. Mo-molybdopterin-binding positions include asparagine 88, 91–92, cysteine 146, threonine 181, asparagine 233, arginine 238, and 249–251; these read YE and GIK.

This sequence belongs to the MsrP family. Heterodimer of a catalytic subunit (MsrP) and a heme-binding subunit (MsrQ). Mo-molybdopterin is required as a cofactor. In terms of processing, predicted to be exported by the Tat system. The position of the signal peptide cleavage has not been experimentally proven.

It is found in the periplasm. The enzyme catalyses L-methionyl-[protein] + a quinone + H2O = L-methionyl-(S)-S-oxide-[protein] + a quinol. It catalyses the reaction L-methionyl-[protein] + a quinone + H2O = L-methionyl-(R)-S-oxide-[protein] + a quinol. Its function is as follows. Part of the MsrPQ system that repairs oxidized periplasmic proteins containing methionine sulfoxide residues (Met-O), using respiratory chain electrons. Thus protects these proteins from oxidative-stress damage caused by reactive species of oxygen and chlorine generated by the host defense mechanisms. MsrPQ is essential for the maintenance of envelope integrity under bleach stress, rescuing a wide series of structurally unrelated periplasmic proteins from methionine oxidation, including the primary periplasmic chaperone SurA and the lipoprotein Pal. The catalytic subunit MsrP is non-stereospecific, being able to reduce both (R-) and (S-) diastereoisomers of methionine sulfoxide. The polypeptide is Protein-methionine-sulfoxide reductase catalytic subunit MsrP (Escherichia coli (strain UTI89 / UPEC)).